A 126-amino-acid polypeptide reads, in one-letter code: Large ribosomal subunit protein eL18 (126 aa).

Belongs to the eukaryotic ribosomal protein eL18 family.

This is Large ribosomal subunit protein eL18 from Methanosarcina acetivorans (strain ATCC 35395 / DSM 2834 / JCM 12185 / C2A).